A 430-amino-acid polypeptide reads, in one-letter code: Tol-Pal system protein TolB (430 aa).

The signal sequence occupies residues 1–21 (MKQALRVAFGFLMLWAAMLHA).

Belongs to the TolB family. In terms of assembly, the Tol-Pal system is composed of five core proteins: the inner membrane proteins TolA, TolQ and TolR, the periplasmic protein TolB and the outer membrane protein Pal. They form a network linking the inner and outer membranes and the peptidoglycan layer.

It localises to the periplasm. In terms of biological role, part of the Tol-Pal system, which plays a role in outer membrane invagination during cell division and is important for maintaining outer membrane integrity. TolB occupies a key intermediary position in the Tol-Pal system because it communicates directly with both membrane-embedded components, Pal in the outer membrane and TolA in the inner membrane. This is Tol-Pal system protein TolB from Escherichia fergusonii (strain ATCC 35469 / DSM 13698 / CCUG 18766 / IAM 14443 / JCM 21226 / LMG 7866 / NBRC 102419 / NCTC 12128 / CDC 0568-73).